Here is a 264-residue protein sequence, read N- to C-terminus: 3-methyl-2-oxobutanoate hydroxymethyltransferase (264 aa).

The Mg(2+) site is built by D42 and D81. 3-methyl-2-oxobutanoate is bound by residues 42–43 (DS), D81, and K110. Residue E112 participates in Mg(2+) binding. Catalysis depends on E179, which acts as the Proton acceptor.

It belongs to the PanB family. In terms of assembly, homodecamer; pentamer of dimers. The cofactor is Mg(2+).

Its subcellular location is the cytoplasm. It carries out the reaction 3-methyl-2-oxobutanoate + (6R)-5,10-methylene-5,6,7,8-tetrahydrofolate + H2O = 2-dehydropantoate + (6S)-5,6,7,8-tetrahydrofolate. Its pathway is cofactor biosynthesis; (R)-pantothenate biosynthesis; (R)-pantoate from 3-methyl-2-oxobutanoate: step 1/2. In terms of biological role, catalyzes the reversible reaction in which hydroxymethyl group from 5,10-methylenetetrahydrofolate is transferred onto alpha-ketoisovalerate to form ketopantoate. The sequence is that of 3-methyl-2-oxobutanoate hydroxymethyltransferase from Francisella tularensis subsp. tularensis (strain FSC 198).